A 150-amino-acid polypeptide reads, in one-letter code: Small ribosomal subunit protein uS9 (150 aa).

This sequence belongs to the universal ribosomal protein uS9 family.

The protein is Small ribosomal subunit protein uS9 of Mycolicibacterium smegmatis (strain ATCC 700084 / mc(2)155) (Mycobacterium smegmatis).